Reading from the N-terminus, the 269-residue chain is tRNA-cytidine(32) 2-sulfurtransferase (269 aa).

The PP-loop motif motif lies at 53–58; it reads SGGKDS. [4Fe-4S] cluster is bound by residues Cys-128, Cys-131, and Cys-218.

This sequence belongs to the TtcA family. Homodimer. Requires Mg(2+) as cofactor. The cofactor is [4Fe-4S] cluster.

It localises to the cytoplasm. The catalysed reaction is cytidine(32) in tRNA + S-sulfanyl-L-cysteinyl-[cysteine desulfurase] + AH2 + ATP = 2-thiocytidine(32) in tRNA + L-cysteinyl-[cysteine desulfurase] + A + AMP + diphosphate + H(+). Its pathway is tRNA modification. In terms of biological role, catalyzes the ATP-dependent 2-thiolation of cytidine in position 32 of tRNA, to form 2-thiocytidine (s(2)C32). The sulfur atoms are provided by the cysteine/cysteine desulfurase (IscS) system. In Pelobacter propionicus (strain DSM 2379 / NBRC 103807 / OttBd1), this protein is tRNA-cytidine(32) 2-sulfurtransferase.